The chain runs to 494 residues: Tripartite motif-containing protein 5 (494 aa).

Ala2 is subject to N-acetylalanine. The RING-type zinc-finger motif lies at 15–59 (CPICLELLTEPLSLDCGHSFCQACITANHKESTPHQGERSCPLCR). Ser86 carries the post-translational modification Phosphoserine. Residues 91–132 (QKVGHCARHGEKLLLFCEQDGNVICWLCERSQEHRGHHTLLV) form a B box-type zinc finger. The Zn(2+) site is built by Cys96, His99, Cys118, and His124. Positions 131–223 (LVEEVAEKYQ…RLVQSESDMV (93 aa)) form a coiled coil. The required for interaction with GABARAP and for autophagy stretch occupies residues 186–199 (FKQLRDILDCEESK). Residues 280–494 (PDLKAMLQAF…LPMTLCSPSS (215 aa)) form the B30.2/SPRY domain.

The protein belongs to the TRIM/RBCC family. In terms of assembly, can form homodimers and homotrimers. In addition to lower-order dimerization, also exhibits a higher-order multimerization and both low- and high-order multimerizations are essential for its restriction activity. Interacts with BTBD1 and BTBD2. Interacts with PSMC4, PSMC5, PSMD7 and HSPA8/HSC70. Interacts (via B30.2/SPRY domain) with HSPA1A/B. Interacts with PSMC2, MAP3K7/TAK1, TAB2 and TAB3. Interacts with SQSTM1. Interacts with TRIM6 and TRIM34. Interacts with ULK1 (phosphorylated form), GABARAP, GABARAPL1, GABARAPL2, MAP1LC3A, MAP1LC3C and BECN1. Degraded in a proteasome-independent fashion in the absence of viral infection but in a proteasome-dependent fashion following exposure to restriction sensitive virus. Post-translationally, autoubiquitinated in a RING finger- and UBE2D2-dependent manner. Monoubiquitinated by TRIM21. Deubiquitinated by Yersinia YopJ. Ubiquitination may not lead to proteasomal degradation.

The protein localises to the cytoplasm. It is found in the nucleus. It catalyses the reaction S-ubiquitinyl-[E2 ubiquitin-conjugating enzyme]-L-cysteine + [acceptor protein]-L-lysine = [E2 ubiquitin-conjugating enzyme]-L-cysteine + N(6)-ubiquitinyl-[acceptor protein]-L-lysine.. It functions in the pathway protein modification; protein ubiquitination. Functionally, capsid-specific restriction factor that prevents infection from non-host-adapted retroviruses. Blocks viral replication early in the life cycle, after viral entry but before reverse transcription. In addition to acting as a capsid-specific restriction factor, also acts as a pattern recognition receptor that activates innate immune signaling in response to the retroviral capsid lattice. Binding to the viral capsid triggers its E3 ubiquitin ligase activity, and in concert with the heterodimeric ubiquitin conjugating enzyme complex UBE2V1-UBE2N (also known as UBC13-UEV1A complex) generates 'Lys-63'-linked polyubiquitin chains, which in turn are catalysts in the autophosphorylation of the MAP3K7/TAK1 complex (includes TAK1, TAB2, and TAB3). Activation of the MAP3K7/TAK1 complex by autophosphorylation results in the induction and expression of NF-kappa-B and MAPK-responsive inflammatory genes, thereby leading to an innate immune response in the infected cell. Plays a role in regulating autophagy through activation of autophagy regulator BECN1 by causing its dissociation from its inhibitors BCL2 and TAB2. This chain is Tripartite motif-containing protein 5 (TRIM5), found in Saguinus labiatus (Red-chested mustached tamarin).